We begin with the raw amino-acid sequence, 414 residues long: Gamma-glutamyl phosphate reductase (414 aa).

It belongs to the gamma-glutamyl phosphate reductase family.

It is found in the cytoplasm. It carries out the reaction L-glutamate 5-semialdehyde + phosphate + NADP(+) = L-glutamyl 5-phosphate + NADPH + H(+). It participates in amino-acid biosynthesis; L-proline biosynthesis; L-glutamate 5-semialdehyde from L-glutamate: step 2/2. Its function is as follows. Catalyzes the NADPH-dependent reduction of L-glutamate 5-phosphate into L-glutamate 5-semialdehyde and phosphate. The product spontaneously undergoes cyclization to form 1-pyrroline-5-carboxylate. This Limosilactobacillus reuteri (strain DSM 20016) (Lactobacillus reuteri) protein is Gamma-glutamyl phosphate reductase.